Here is a 268-residue protein sequence, read N- to C-terminus: 4-hydroxy-tetrahydrodipicolinate reductase (268 aa).

Residues 10-15, D36, 99-101, and 123-126 contribute to the NAD(+) site; these read GASGRM, GTT, and APNM. The active-site Proton donor/acceptor is H156. H157 lines the (S)-2,3,4,5-tetrahydrodipicolinate pocket. Residue K160 is the Proton donor of the active site. 166–167 lines the (S)-2,3,4,5-tetrahydrodipicolinate pocket; sequence GT.

This sequence belongs to the DapB family.

It is found in the cytoplasm. It carries out the reaction (S)-2,3,4,5-tetrahydrodipicolinate + NAD(+) + H2O = (2S,4S)-4-hydroxy-2,3,4,5-tetrahydrodipicolinate + NADH + H(+). The enzyme catalyses (S)-2,3,4,5-tetrahydrodipicolinate + NADP(+) + H2O = (2S,4S)-4-hydroxy-2,3,4,5-tetrahydrodipicolinate + NADPH + H(+). Its pathway is amino-acid biosynthesis; L-lysine biosynthesis via DAP pathway; (S)-tetrahydrodipicolinate from L-aspartate: step 4/4. Its function is as follows. Catalyzes the conversion of 4-hydroxy-tetrahydrodipicolinate (HTPA) to tetrahydrodipicolinate. The sequence is that of 4-hydroxy-tetrahydrodipicolinate reductase from Janthinobacterium sp. (strain Marseille) (Minibacterium massiliensis).